The following is a 712-amino-acid chain: Polyribonucleotide nucleotidyltransferase (712 aa).

Residues Asp-487 and Asp-493 each contribute to the Mg(2+) site. A KH domain is found at 554–613 (PRIEVMNIPVDKIREVIGSGGKVIREIVEKTGAKINIEDDGTVKIASSSGKEIEAARKWI). The 69-residue stretch at 623–691 (GQIYEGTVVK…ERGKVRLSMK (69 aa)) folds into the S1 motif domain.

It belongs to the polyribonucleotide nucleotidyltransferase family. Mg(2+) serves as cofactor.

It localises to the cytoplasm. The catalysed reaction is RNA(n+1) + phosphate = RNA(n) + a ribonucleoside 5'-diphosphate. In terms of biological role, involved in mRNA degradation. Catalyzes the phosphorolysis of single-stranded polyribonucleotides processively in the 3'- to 5'-direction. This Rhizobium etli (strain ATCC 51251 / DSM 11541 / JCM 21823 / NBRC 15573 / CFN 42) protein is Polyribonucleotide nucleotidyltransferase.